Reading from the N-terminus, the 315-residue chain is Calumenin (315 aa).

An N-terminal signal peptide occupies residues 1-19; that stretch reads MDTRRLLLCLCLWVACVVS. EF-hand domains follow at residues 68-103, 104-139, 151-186, 188-223, 229-264, and 265-300; these read ESKE…AQKK, YVYD…TYLD, QMMV…EEFD, MKDI…HDGD, WVKT…SDYD, and HAEA…FVGS. Asp-81, Asp-83, Asp-85, Tyr-87, Glu-92, Asp-117, Asn-119, Asp-121, and Glu-128 together coordinate Ca(2+). N-linked (GlcNAc...) asparagine glycosylation is present at Asn-131. Residues Asp-164, Asp-166, Asp-168, Glu-175, Asp-201, Asn-203, Asp-205, Glu-212, Asp-242, Asn-244, Asp-246, Lys-248, Glu-253, Asp-278, Asn-280, Asp-282, Lys-284, and Glu-289 each contribute to the Ca(2+) site. Positions 312-315 match the Prevents secretion from ER motif; the sequence is HDEF.

This sequence belongs to the CREC family. As to quaternary structure, interacts with ggcx.

The protein resides in the endoplasmic reticulum membrane. It localises to the golgi apparatus. It is found in the secreted. The protein localises to the melanosome. Its subcellular location is the sarcoplasmic reticulum lumen. Involved in regulation of vitamin K-dependent carboxylation of multiple N-terminal glutamate residues. Seems to inhibit gamma-carboxylase ggcx. Binds 7 calcium ions with a low affinity. This chain is Calumenin (calu), found in Xenopus tropicalis (Western clawed frog).